Consider the following 258-residue polypeptide: Acyl-[acyl-carrier-protein]--UDP-N-acetylglucosamine O-acyltransferase (258 aa).

Belongs to the transferase hexapeptide repeat family. LpxA subfamily. As to quaternary structure, homotrimer.

The protein localises to the cytoplasm. It catalyses the reaction a (3R)-hydroxyacyl-[ACP] + UDP-N-acetyl-alpha-D-glucosamine = a UDP-3-O-[(3R)-3-hydroxyacyl]-N-acetyl-alpha-D-glucosamine + holo-[ACP]. Its pathway is glycolipid biosynthesis; lipid IV(A) biosynthesis; lipid IV(A) from (3R)-3-hydroxytetradecanoyl-[acyl-carrier-protein] and UDP-N-acetyl-alpha-D-glucosamine: step 1/6. Functionally, involved in the biosynthesis of lipid A, a phosphorylated glycolipid that anchors the lipopolysaccharide to the outer membrane of the cell. The protein is Acyl-[acyl-carrier-protein]--UDP-N-acetylglucosamine O-acyltransferase of Pseudomonas syringae pv. syringae (strain B728a).